A 93-amino-acid polypeptide reads, in one-letter code: Putative regulatory protein Fnod_1678 (93 aa).

It belongs to the RemA family.

In Fervidobacterium nodosum (strain ATCC 35602 / DSM 5306 / Rt17-B1), this protein is Putative regulatory protein Fnod_1678.